A 338-amino-acid chain; its full sequence is Ketol-acid reductoisomerase (NADP(+)) (338 aa).

The region spanning 3-183 (IELLYDADAD…GGARAGVIPT (181 aa)) is the KARI N-terminal Rossmann domain. NADP(+) is bound by residues 26–29 (YGSQ), R49, S52, S54, and 84–87 (DTSQ). H109 is a catalytic residue. NADP(+) is bound at residue G135. The 146-residue stretch at 184–329 (TFEAETVTDL…AKLRDLMSWV (146 aa)) folds into the KARI C-terminal knotted domain. Positions 192, 196, 228, and 232 each coordinate Mg(2+). Residue S253 coordinates substrate.

It belongs to the ketol-acid reductoisomerase family. Requires Mg(2+) as cofactor.

The catalysed reaction is (2R)-2,3-dihydroxy-3-methylbutanoate + NADP(+) = (2S)-2-acetolactate + NADPH + H(+). The enzyme catalyses (2R,3R)-2,3-dihydroxy-3-methylpentanoate + NADP(+) = (S)-2-ethyl-2-hydroxy-3-oxobutanoate + NADPH + H(+). The protein operates within amino-acid biosynthesis; L-isoleucine biosynthesis; L-isoleucine from 2-oxobutanoate: step 2/4. It participates in amino-acid biosynthesis; L-valine biosynthesis; L-valine from pyruvate: step 2/4. Functionally, involved in the biosynthesis of branched-chain amino acids (BCAA). Catalyzes an alkyl-migration followed by a ketol-acid reduction of (S)-2-acetolactate (S2AL) to yield (R)-2,3-dihydroxy-isovalerate. In the isomerase reaction, S2AL is rearranged via a Mg-dependent methyl migration to produce 3-hydroxy-3-methyl-2-ketobutyrate (HMKB). In the reductase reaction, this 2-ketoacid undergoes a metal-dependent reduction by NADPH to yield (R)-2,3-dihydroxy-isovalerate. The polypeptide is Ketol-acid reductoisomerase (NADP(+)) (Corynebacterium glutamicum (strain ATCC 13032 / DSM 20300 / JCM 1318 / BCRC 11384 / CCUG 27702 / LMG 3730 / NBRC 12168 / NCIMB 10025 / NRRL B-2784 / 534)).